The sequence spans 308 residues: tRNA pseudouridine synthase B (308 aa).

The Nucleophile role is filled by aspartate 47.

The protein belongs to the pseudouridine synthase TruB family. Type 1 subfamily.

It catalyses the reaction uridine(55) in tRNA = pseudouridine(55) in tRNA. In terms of biological role, responsible for synthesis of pseudouridine from uracil-55 in the psi GC loop of transfer RNAs. In Xanthomonas campestris pv. campestris (strain B100), this protein is tRNA pseudouridine synthase B.